The primary structure comprises 1130 residues: DNA-directed RNA polymerase I subunit rpa2 (1130 aa).

The C4-type zinc finger occupies 1070 to 1096 (CKLCGSTLTIYSKKDYSNQTVSECKSC).

The protein belongs to the RNA polymerase beta chain family. Component of the RNA polymerase I (Pol I) complex consisting of 14 subunits.

It is found in the nucleus. Its subcellular location is the nucleolus. The enzyme catalyses RNA(n) + a ribonucleoside 5'-triphosphate = RNA(n+1) + diphosphate. In terms of biological role, DNA-dependent RNA polymerase catalyzes the transcription of DNA into RNA using the four ribonucleoside triphosphates as substrates. Second largest core component of RNA polymerase I which synthesizes ribosomal RNA precursors. Proposed to contribute to the polymerase catalytic activity and forms the polymerase active center together with the largest subunit. Pol I is composed of mobile elements and RPA2 is part of the core element with the central large cleft and probably a clamp element that moves to open and close the cleft. The sequence is that of DNA-directed RNA polymerase I subunit rpa2 (polr1b) from Dictyostelium discoideum (Social amoeba).